We begin with the raw amino-acid sequence, 362 residues long: Protein MGF 360-19R (362 aa).

Residues 66 to 98 (LLNTALMKAVQDNNYELIKLFTEWGANINYGLI) form an ANK repeat.

It belongs to the asfivirus MGF 360 family.

Its function is as follows. Plays a role in virus cell tropism, and may be required for efficient virus replication in macrophages. The sequence is that of Protein MGF 360-19R from Ornithodoros (relapsing fever ticks).